The primary structure comprises 125 residues: Small ribosomal subunit protein bS6 (125 aa).

Belongs to the bacterial ribosomal protein bS6 family.

In terms of biological role, binds together with bS18 to 16S ribosomal RNA. This chain is Small ribosomal subunit protein bS6 (rpsF), found in Pasteurella multocida (strain Pm70).